A 620-amino-acid polypeptide reads, in one-letter code: Long-chain fatty acid transport protein 2 (620 aa).

Residues 1–4 (MLSA) lie on the Lumenal side of the membrane. Residues 5–27 (IYTVLAGLLFLPLLVNLCCPYFF) traverse the membrane as a helical segment. Topologically, residues 28-106 (QDIGYFLKVA…DHLGLRQGDC (79 aa)) are cytoplasmic. Residues 107–127 (VALLMGNEPAYVWLWLGLVKL) form a helical membrane-spanning segment. The Lumenal portion of the chain corresponds to 128–261 (GCAMACLNYN…SGLKADDVIY (134 aa)). AMP is bound at residue 222-233 (YIYTSGTTGLPK). The chain crosses the membrane as a helical span at residues 262-282 (ITLPFYHSAALLIGIHGCIVA). At 283–620 (GATLALRTKF…NAISAKTLKL (338 aa)) the chain is on the cytoplasmic side. N6-acetyllysine is present on K291. T577 bears the Phosphothreonine mark.

The protein belongs to the ATP-dependent AMP-binding enzyme family. In terms of tissue distribution, expressed in liver, kidney, placenta, intestine, brain, heart, and colon. Predominantly expressed in liver. As to expression, expressed in liver, placenta, and intestine, but much lower relative to isoform 1.

The protein resides in the endoplasmic reticulum membrane. Its subcellular location is the peroxisome membrane. The protein localises to the cell membrane. It localises to the microsome. It carries out the reaction a fatty acid(in) = a fatty acid(out). It catalyses the reaction (9Z)-octadecenoate(out) = (9Z)-octadecenoate(in). The catalysed reaction is a long-chain fatty acid + ATP + CoA = a long-chain fatty acyl-CoA + AMP + diphosphate. The enzyme catalyses (5Z,8Z,11Z,14Z)-eicosatetraenoate + ATP + CoA = (5Z,8Z,11Z,14Z)-eicosatetraenoyl-CoA + AMP + diphosphate. It carries out the reaction hexadecanoate + ATP + CoA = hexadecanoyl-CoA + AMP + diphosphate. It catalyses the reaction (9Z)-octadecenoate + ATP + CoA = (9Z)-octadecenoyl-CoA + AMP + diphosphate. The catalysed reaction is 3,7,11,15-tetramethylhexadecanoate + ATP + CoA = phytanoyl-CoA + AMP + diphosphate. The enzyme catalyses (9Z,12Z,15Z)-octadecatrienoate + ATP + CoA = (9Z,12Z,15Z)-octadecatrienoyl-CoA + AMP + diphosphate. It carries out the reaction 2,6,10,14-tetramethylpentadecanoate + ATP + CoA = pristanoyl-CoA + AMP + diphosphate. It catalyses the reaction (E)-hexadec-2-enoate + ATP + CoA = (2E)-hexadecenoyl-CoA + AMP + diphosphate. The catalysed reaction is a very long-chain fatty acid + ATP + CoA = a very long-chain fatty acyl-CoA + AMP + diphosphate. The enzyme catalyses tetracosanoate + ATP + CoA = tetracosanoyl-CoA + AMP + diphosphate. It carries out the reaction (4Z,7Z,10Z,13Z,16Z,19Z)-docosahexaenoate + ATP + CoA = (4Z,7Z,10Z,13Z,16Z,19Z)-docosahexaenoyl-CoA + AMP + diphosphate. It catalyses the reaction (25R)-3alpha,7alpha,12alpha-trihydroxy-5beta-cholestan-26-oate + ATP + CoA = (25R)-3alpha,7alpha,12alpha-trihydroxy-5beta-cholestan-26-oyl-CoA + AMP + diphosphate. Mediates the import of long-chain fatty acids (LCFA) into the cell by facilitating their transport across cell membranes, playing an important role in hepatic fatty acid uptake. Also functions as an acyl-CoA ligase catalyzing the ATP-dependent formation of fatty acyl-CoA using LCFA and very-long-chain fatty acids (VLCFA) as substrates, which prevents fatty acid efflux from cells and might drive more fatty acid uptake. Plays a pivotal role in regulating available LCFA substrates from exogenous sources in tissues undergoing high levels of beta-oxidation or triglyceride synthesis. Can also activate branched-chain fatty acids such as phytanic acid and pristanic acid. May contribute to the synthesis of sphingosine-1-phosphate. Does not activate C24 bile acids, cholate and chenodeoxycholate. In vitro, activates 3-alpha,7-alpha,12-alpha-trihydroxy-5-beta-cholestanate (THCA), the C27 precursor of cholic acid deriving from the de novo synthesis from cholesterol. However, it is not critical for THCA activation and bile synthesis in vivo. Functionally, exhibits both long-chain fatty acids (LCFA) transport activity and acyl CoA synthetase towards very long-chain fatty acids. Shows a preference for generating CoA derivatives of n-3 fatty acids, which are preferentially trafficked into phosphatidylinositol. In terms of biological role, exhibits long-chain fatty acids (LCFA) transport activity but lacks acyl CoA synthetase towards very long-chain fatty acids. This is Long-chain fatty acid transport protein 2 (SLC27A2) from Homo sapiens (Human).